The chain runs to 249 residues: Probable transcriptional regulatory protein Rru_A1086 (249 aa).

It belongs to the TACO1 family.

The protein localises to the cytoplasm. The polypeptide is Probable transcriptional regulatory protein Rru_A1086 (Rhodospirillum rubrum (strain ATCC 11170 / ATH 1.1.1 / DSM 467 / LMG 4362 / NCIMB 8255 / S1)).